Reading from the N-terminus, the 225-residue chain is Platelet-derived growth factor subunit B (225 aa).

The first 12 residues, leucine 1 to alanine 12, serve as a signal peptide directing secretion. Positions glutamate 13 to arginine 73 are cleaved as a propeptide — removed in mature form. Residue asparagine 55 is glycosylated (N-linked (GlcNAc...) asparagine). 3 disulfides stabilise this stretch: cysteine 89–cysteine 133, cysteine 122–cysteine 170, and cysteine 126–cysteine 172. Positions arginine 183–lysine 225 are cleaved as a propeptide — removed in mature form.

This sequence belongs to the PDGF/VEGF growth factor family. As to quaternary structure, antiparallel homodimer; disulfide-linked. Antiparallel heterodimer with PDGFA; disulfide-linked. The PDGFB homodimer interacts with PDGFRA and PDGFRB homodimers, and with heterodimers formed by PDGFRA and PDGFRB. The heterodimer composed of PDGFA and PDGFB interacts with PDGFRB homodimers, and with heterodimers formed by PDGFRA and PDGFRB. Interacts with XLKD1. Interacts with LRP1. Interacts with SORL1 (via the N-terminal ectodomain). Interacts with CD82; this interaction inhibits PDGFB-mediated signaling pathway. In terms of tissue distribution, expressed in a distinct subpopulation of smooth muscle cells in injured arteries.

Its subcellular location is the secreted. In terms of biological role, growth factor that plays an essential role in the regulation of embryonic development, cell proliferation, cell migration, survival and chemotaxis. Potent mitogen for cells of mesenchymal origin. Required for normal proliferation and recruitment of pericytes and vascular smooth muscle cells in the central nervous system, skin, lung, heart and placenta. Required for normal blood vessel development, and for normal development of kidney glomeruli. Plays an important role in wound healing. Signaling is modulated by the formation of heterodimers with PDGFA. In Rattus norvegicus (Rat), this protein is Platelet-derived growth factor subunit B (Pdgfb).